The sequence spans 123 residues: Integration host factor subunit alpha (123 aa).

The interval 97–123 (NANGSAPSMSSSASAVDDDKSESASRT) is disordered. The segment covering 98-111 (ANGSAPSMSSSASA) has biased composition (low complexity). Positions 113 to 123 (DDDKSESASRT) are enriched in basic and acidic residues.

The protein belongs to the bacterial histone-like protein family. As to quaternary structure, heterodimer of an alpha and a beta chain.

In terms of biological role, this protein is one of the two subunits of integration host factor, a specific DNA-binding protein that functions in genetic recombination as well as in transcriptional and translational control. This Rhodopseudomonas palustris (strain BisB5) protein is Integration host factor subunit alpha.